A 459-amino-acid polypeptide reads, in one-letter code: Transcription factor 7-like 2 (459 aa).

Positions 1–11 (MPQLNGGGGDD) are enriched in gly residues. Residues 1–53 (MPQLNGGGGDDLGANDELISFKDEGEQEEKNSENSSAERDLADVKSSLVNESE) are CTNNB1-binding. The segment at 1–96 (MPQLNGGGGD…AKRQDGGLFK (96 aa)) is disordered. The span at 19–43 (ISFKDEGEQEEKNSENSSAERDLAD) shows a compositional bias: basic and acidic residues. Lys22 is covalently cross-linked (Glycyl lysine isopeptide (Lys-Gly) (interchain with G-Cter in SUMO2)). Residues 47–56 (SLVNESETNQ) show a composition bias toward polar residues. Over residues 63 to 91 (EAERRPPPRSESFRDKSRESLEEAAKRQD) the composition is skewed to basic and acidic residues. Thr178 and Thr189 each carry phosphothreonine; by NLK. The tract at residues 178–372 (TPLITYSNEH…RRWHALSREE (195 aa)) is mediates interaction with MAD2L2. The span at 295–305 (TVKQESSQSDV) shows a compositional bias: polar residues. Disordered regions lie at residues 295–327 (TVKQ…KPHI) and 397–418 (RDNY…TNEH). Lys297 participates in a covalent cross-link: Glycyl lysine isopeptide (Lys-Gly) (interchain with G-Cter in SUMO). Over residues 312–323 (KHQDSKKEEEKK) the composition is skewed to basic and acidic residues. Positions 327 to 395 (IKKPLNAFML…LHMQLYPGWS (69 aa)) form a DNA-binding region, HMG box. A Nuclear localization signal motif is present at residues 402-408 (KKKKRKR).

Belongs to the TCF/LEF family. Interacts with TGFB1I1. Interacts with SPIN1. Interacts with CTNNB1 (via the armadillo repeat); forms stable transcription complex. Interacts with EP300. Interacts with NLK. Interacts with CCDC85B (probably through the HMG box); prevents interaction with CTNNB1. Interacts with TNIK. Interacts with MAD2L2; prevents TCF7L2/TCF4 binding to promZIPK/DAPK3oters, negatively modulating its transcriptional activity. Interacts with ZIPK/DAPK3. Interacts with XIAP/BIRC4 and TLE3. Interacts with DDIT3/CHOP. The CTNNB1 and TCF7L2/TCF4 complex interacts with PML (isoform PML-4). Identified in a complex with CTNNB1 and FERMT2. Interacts with C11orf84/SPINDOC in a SPIN1-dependent manner. Interacts with DAZAP2; the interaction results in localization of DAZAP2 to the nucleus. In terms of processing, phosphorylated at Thr-178 and/or Thr-189 by NLK. Phosphorylation by NLK at these sites inhibits DNA-binding by TCF7L2/TCF4, thereby preventing transcriptional activation of target genes of the canonical Wnt/beta-catenin signaling pathway. Post-translationally, polysumoylated. Sumoylation is enhanced by PIAS family members and desumoylation is enhanced by SENP2. Sumoylation/desumoylation regulates TCF7L2/TCF4 transcription activity in the Wnt/beta-catenin signaling pathway without altering interaction with CTNNB1 nor binding to DNA. Detected in adult brain and liver, and at lower levels in intestine, with a clear increase from the distal colon to the duodenum. Detected at low levels in heart, lung, kidney, pituitary and testis.

Its subcellular location is the nucleus. It localises to the PML body. In terms of biological role, participates in the Wnt signaling pathway and modulates MYC expression by binding to its promoter in a sequence-specific manner. Acts as a repressor in the absence of CTNNB1, and as activator in its presence. Activates transcription from promoters with several copies of the Tcf motif CCTTTGATC in the presence of CTNNB1. TLE1, TLE2, TLE3 and TLE4 repress transactivation mediated by TCF7L2/TCF4 and CTNNB1. Expression of dominant-negative mutants results in cell-cycle arrest in G1. Necessary for the maintenance of the epithelial stem-cell compartment of the small intestine. The sequence is that of Transcription factor 7-like 2 (Tcf7l2) from Mus musculus (Mouse).